Consider the following 313-residue polypeptide: Coproporphyrin III ferrochelatase (313 aa).

Fe(2+) contacts are provided by H191 and E270.

Belongs to the ferrochelatase family.

It is found in the cytoplasm. It catalyses the reaction Fe-coproporphyrin III + 2 H(+) = coproporphyrin III + Fe(2+). It participates in porphyrin-containing compound metabolism; protoheme biosynthesis. Its function is as follows. Involved in coproporphyrin-dependent heme b biosynthesis. Catalyzes the insertion of ferrous iron into coproporphyrin III to form Fe-coproporphyrin III. The protein is Coproporphyrin III ferrochelatase of Enterococcus faecalis (strain ATCC 700802 / V583).